Here is a 395-residue protein sequence, read N- to C-terminus: Vascular endothelial growth factor A, long form (395 aa).

2 disordered regions span residues 1-45 (MTDR…VEGV) and 73-175 (EAEP…AGPG). Residues 73–85 (EAEPSGAARSASS) show a composition bias toward low complexity. Residues 91–102 (QPEEGEEEEEKE) are compositionally biased toward acidic residues. Composition is skewed to low complexity over residues 123 to 143 (AAVCADSAPAARAPQALARAS) and 165 to 175 (RRGSASRAGPG). 3 disulfide bridges follow: C232/C274, C263/C308, and C267/C310. Residue N281 is glycosylated (N-linked (GlcNAc...) asparagine). Residues 314–323 (KDRARQEKKS) are compositionally biased toward basic and acidic residues. The segment at 314-344 (KDRARQEKKSVRGKGKGQKRKRKKSRYKSWS) is disordered. Basic residues predominate over residues 324-340 (VRGKGKGQKRKRKKSRY).

This sequence belongs to the PDGF/VEGF growth factor family. As to quaternary structure, homodimer; disulfide-linked. Also found as heterodimer with PGF. Interacts with NRP1. Interacts with isoform 2 of BSG. Interacts with CD82; this interaction inhibits VEGFA-mediated signaling pathway. Post-translationally, produced by use of an alternative upstream CUG codon and post-translationally processed into the N-terminal N-VEGF form and the C-terminal secreted VEGFA form. Higher expression in pituitary tumors than the pituitary gland. As to expression, widely expressed. In terms of tissue distribution, not widely expressed.

It is found in the cytoplasm. The protein resides in the nucleus. Its subcellular location is the secreted. The protein localises to the endoplasmic reticulum. It localises to the golgi apparatus. It is found in the extracellular space. The protein resides in the extracellular matrix. Functionally, participates in the induction of key genes involved in the response to hypoxia and in the induction of angiogenesis such as HIF1A. Involved in protecting cells from hypoxia-mediated cell death. Its function is as follows. Growth factor active in angiogenesis, vasculogenesis and endothelial cell growth. Induces endothelial cell proliferation, promotes cell migration, inhibits apoptosis and induces permeabilization of blood vessels. Binds to the FLT1/VEGFR1 and KDR/VEGFR2 receptors, heparan sulfate and heparin. Binds to the NRP1/neuropilin-1 receptor. Binding to NRP1 initiates a signaling pathway needed for motor neuron axon guidance and cell body migration, including for the caudal migration of facial motor neurons from rhombomere 4 to rhombomere 6 during embryonic development. Also binds the DEAR/FBXW7-AS1 receptor. Binds to the KDR receptor but does not activate downstream signaling pathways, does not activate angiogenesis and inhibits tumor growth. The sequence is that of Vascular endothelial growth factor A, long form (VEGFA) from Homo sapiens (Human).